A 491-amino-acid chain; its full sequence is Cytosol aminopeptidase (491 aa).

2 residues coordinate Mn(2+): Lys-263 and Asp-268. Residue Lys-275 is part of the active site. Mn(2+) contacts are provided by Asp-286, Asp-345, and Glu-347. Arg-349 is an active-site residue.

Belongs to the peptidase M17 family. Requires Mn(2+) as cofactor.

It is found in the cytoplasm. The enzyme catalyses Release of an N-terminal amino acid, Xaa-|-Yaa-, in which Xaa is preferably Leu, but may be other amino acids including Pro although not Arg or Lys, and Yaa may be Pro. Amino acid amides and methyl esters are also readily hydrolyzed, but rates on arylamides are exceedingly low.. The catalysed reaction is Release of an N-terminal amino acid, preferentially leucine, but not glutamic or aspartic acids.. In terms of biological role, presumably involved in the processing and regular turnover of intracellular proteins. Catalyzes the removal of unsubstituted N-terminal amino acids from various peptides. In Haemophilus influenzae (strain ATCC 51907 / DSM 11121 / KW20 / Rd), this protein is Cytosol aminopeptidase (pepA).